The chain runs to 197 residues: MSGTLSQGSSPARLTLWEEENFQGRRCELMSDCSSIRELSGFRRVRSVKVESGAWVGFEYPDFQGQQFILEKGDYPRSTAWSGSSGYRTDQLLSFRPLLCANHSDSRVTLYEGENFQGCKFELSDDYPSLPAMGWASKDVGSLKVTSGAWVGYQYPGFRGYQYVLEQDRHSGEFRKYSEFGTQAHTNQLQSIRRVQH.

The interval 1–11 (MSGTLSQGSSP) is N-terminal arm. Beta/gamma crystallin 'Greek key' domains lie at 12–52 (ARLT…KVES) and 53–99 (GAWV…RPLL). The connecting peptide stretch occupies residues 100–105 (CANHSD). Beta/gamma crystallin 'Greek key' domains follow at residues 106–147 (SRVT…KVTS) and 148–196 (GAWV…RRVQ).

The protein belongs to the beta/gamma-crystallin family. Homo/heterodimer, or complexes of higher-order. The structure of beta-crystallin oligomers seems to be stabilized through interactions between the N-terminal arms.

In terms of biological role, crystallins are the dominant structural components of the vertebrate eye lens. The polypeptide is Beta-crystallin A2 (CRYBA2) (Macropus fuliginosus (Western gray kangaroo)).